Reading from the N-terminus, the 91-residue chain is Gas vesicle protein K (91 aa).

Belongs to the gas vesicle GvpK family.

The protein localises to the gas vesicle. Its function is as follows. Might be involved in nucleating gas vesicle formation. Gas vesicles are hollow, gas filled proteinaceous nanostructures found in some microorganisms. It is not clear what function gas vesicles perform in soil bacteria. This chain is Gas vesicle protein K, found in Streptomyces sp. (strain CB03234).